The sequence spans 339 residues: Anthranilate phosphoribosyltransferase (339 aa).

Residues Gly-81, Gly-84 to Asp-85, Ser-89, Asn-91 to Ser-94, Lys-109 to Ser-117, and Ala-121 each bind 5-phospho-alpha-D-ribose 1-diphosphate. Position 81 (Gly-81) interacts with anthranilate. Ser-93 contacts Mg(2+). Asn-112 serves as a coordination point for anthranilate. Arg-167 is an anthranilate binding site. Mg(2+)-binding residues include Asp-225 and Glu-226.

This sequence belongs to the anthranilate phosphoribosyltransferase family. Homodimer. Requires Mg(2+) as cofactor.

The enzyme catalyses N-(5-phospho-beta-D-ribosyl)anthranilate + diphosphate = 5-phospho-alpha-D-ribose 1-diphosphate + anthranilate. It functions in the pathway amino-acid biosynthesis; L-tryptophan biosynthesis; L-tryptophan from chorismate: step 2/5. Catalyzes the transfer of the phosphoribosyl group of 5-phosphorylribose-1-pyrophosphate (PRPP) to anthranilate to yield N-(5'-phosphoribosyl)-anthranilate (PRA). This chain is Anthranilate phosphoribosyltransferase, found in Brucella canis (strain ATCC 23365 / NCTC 10854 / RM-666).